Reading from the N-terminus, the 166-residue chain is Large ribosomal subunit protein uL10 (166 aa).

It belongs to the universal ribosomal protein uL10 family. Part of the ribosomal stalk of the 50S ribosomal subunit. The N-terminus interacts with L11 and the large rRNA to form the base of the stalk. The C-terminus forms an elongated spine to which L12 dimers bind in a sequential fashion forming a multimeric L10(L12)X complex.

In terms of biological role, forms part of the ribosomal stalk, playing a central role in the interaction of the ribosome with GTP-bound translation factors. The sequence is that of Large ribosomal subunit protein uL10 from Streptococcus agalactiae serotype III (strain NEM316).